The primary structure comprises 85 residues: Beta-insect depressant toxin BmKITb (85 aa).

Positions 1 to 21 are cleaved as a signal peptide; sequence MKLFLLLVISASMLIDGLVNA. In terms of domain architecture, LCN-type CS-alpha/beta spans 22–82; that stretch reads DGYIRGSNGC…TWKSESNTCG (61 aa). Cystine bridges form between Cys-31–Cys-81, Cys-35–Cys-56, Cys-42–Cys-63, and Cys-46–Cys-65. At Gly-82 the chain carries Glycine amide.

Expressed by the venom gland.

The protein resides in the secreted. Its function is as follows. Depressant insect beta-toxins cause a transient contraction paralysis followed by a slow flaccid paralysis. They bind voltage-independently at site-4 of sodium channels (Nav) and shift the voltage of activation toward more negative potentials thereby affecting sodium channel activation and promoting spontaneous and repetitive firing. However, this toxin has some characteristics of excitatory toxins such as bursts of activity after the membrane has been hyperpolarized. This toxin is active only on insects. This is Beta-insect depressant toxin BmKITb from Olivierus martensii (Manchurian scorpion).